A 238-amino-acid polypeptide reads, in one-letter code: DNA repair protein RecO (238 aa).

It belongs to the RecO family.

In terms of biological role, involved in DNA repair and RecF pathway recombination. This Anaplasma marginale (strain St. Maries) protein is DNA repair protein RecO.